Here is a 323-residue protein sequence, read N- to C-terminus: MDWQNRFSVLNLSSHDPLPELMLTHLTGWGAITLVGTDKKAYLQGQVTCNVVSLQEQQVTFGAHCDAKGKVWSVFRLFHHHDGYAMFQPQSAMEVELRELKKYAIFSKVTIAESSDIALGVMGSQADAWIDTVSETTGDVRRIAGGTAVRMSPQRWLLLVNAEQAEQYVNAWQGLHVEQSLWTRMDIEEAVPVVTQTAQNEHIPQALNVQAVDGISFTKGCYTGQETVARAKYRGINKRAMYIVKGNLSAPLSQDEPVVLERAVGENWRSAGALLTYYRFTDSIAIGLIVLPNDLEHDVELRLAAQPDTRWHIQPLPYSLSEE.

Positions 29 and 182 each coordinate folate.

This sequence belongs to the tRNA-modifying YgfZ family.

It localises to the cytoplasm. In terms of biological role, folate-binding protein involved in regulating the level of ATP-DnaA and in the modification of some tRNAs. It is probably a key factor in regulatory networks that act via tRNA modification, such as initiation of chromosomal replication. This Vibrio cholerae serotype O1 (strain ATCC 39541 / Classical Ogawa 395 / O395) protein is tRNA-modifying protein YgfZ.